The chain runs to 93 residues: DNA-directed RNA polymerase subunit omega (93 aa).

The protein belongs to the RNA polymerase subunit omega family. As to quaternary structure, the RNAP catalytic core consists of 2 alpha, 1 beta, 1 beta' and 1 omega subunit. When a sigma factor is associated with the core the holoenzyme is formed, which can initiate transcription.

The enzyme catalyses RNA(n) + a ribonucleoside 5'-triphosphate = RNA(n+1) + diphosphate. Functionally, promotes RNA polymerase assembly. Latches the N- and C-terminal regions of the beta' subunit thereby facilitating its interaction with the beta and alpha subunits. In Actinobacillus pleuropneumoniae serotype 7 (strain AP76), this protein is DNA-directed RNA polymerase subunit omega.